Here is a 643-residue protein sequence, read N- to C-terminus: Ecto-NOX disulfide-thiol exchanger 1 (643 aa).

In terms of domain architecture, RRM spans 142–221 (KTVFVGGLPE…GRLHVDFAQA (80 aa)). Coiled-coil stretches lie at residues 307-342 (VQSANSHVRRLMNEKATHEQEMEEAKENFKNALTGI) and 425-570 (QAYA…EALL).

It belongs to the ENOX family. Cu cation serves as cofactor. Expressed in lymphocyte cells, breast and breast cancer (at protein level). Found in the sera of cancer patients with a wide variety of cancers including breast, prostate, lung and ovarian cancers, leukemias, and lymphomas. Found also in the serum of healthy volunteers or patients with disorders other than cancer. Probably shed into serum by cancer cells.

The protein localises to the cell membrane. Its subcellular location is the secreted. The protein resides in the extracellular space. With respect to regulation, not inhibited by the antitumor sulfonylurea LY181984, the vabilloid capsaicin, and retinoids. In terms of biological role, probably acts as a terminal oxidase of plasma electron transport from cytosolic NAD(P)H via hydroquinones to acceptors at the cell surface. Hydroquinone oxidase activity alternates with a protein disulfide-thiol interchange/oxidoreductase activity which may control physical membrane displacements associated with vesicle budding or cell enlargement. The activities oscillate with a period length of 24 minutes and play a role in control of the ultradian cellular biological clock. The chain is Ecto-NOX disulfide-thiol exchanger 1 (ENOX1) from Homo sapiens (Human).